A 391-amino-acid polypeptide reads, in one-letter code: DNA polymerase IV (391 aa).

The 182-residue stretch at 6–187 (IIHVDMDAFF…LPVEMLWGVG (182 aa)) folds into the UmuC domain. Mg(2+)-binding residues include Asp10 and Asp105. Residue Glu106 is part of the active site.

It belongs to the DNA polymerase type-Y family. Monomer. It depends on Mg(2+) as a cofactor.

It is found in the cytoplasm. The enzyme catalyses DNA(n) + a 2'-deoxyribonucleoside 5'-triphosphate = DNA(n+1) + diphosphate. In terms of biological role, poorly processive, error-prone DNA polymerase involved in untargeted mutagenesis. Copies undamaged DNA at stalled replication forks, which arise in vivo from mismatched or misaligned primer ends. These misaligned primers can be extended by PolIV. Exhibits no 3'-5' exonuclease (proofreading) activity. May be involved in translesional synthesis, in conjunction with the beta clamp from PolIII. This Carboxydothermus hydrogenoformans (strain ATCC BAA-161 / DSM 6008 / Z-2901) protein is DNA polymerase IV.